The sequence spans 223 residues: MAGFGFRRHGVQPDLASRTWPCTALFSLLFIPVFSKGMHAAQPAVVLASSRGVASFVCEYGSSGNAAEVRVTMLRQAGSQMTEVCAATYTVEDELAFLDDSTCTGTSSGNKVNLTIQGLRAMGTGLYICKVELMYPPPYYVGMGNGTQIYVIDPEPCPDSDFLLWILAAVSSGLFFYSFLITAVSLSKMLKKRSPLTTGVYVKMPPTGPECEKQFQPYFIPIN.

The signal sequence occupies residues 1–35 (MAGFGFRRHGVQPDLASRTWPCTALFSLLFIPVFS). At 36–161 (KGMHAAQPAV…IDPEPCPDSD (126 aa)) the chain is on the extracellular side. Positions 39-140 (HAAQPAVVLA…VELMYPPPYY (102 aa)) constitute an Ig-like V-type domain. Residues 46-50 (VLASS) are homodimerization. Disulfide bonds link cysteine 58–cysteine 129 and cysteine 85–cysteine 103. N-linked (GlcNAc...) asparagine glycosylation is present at asparagine 113. The interval 134–139 (MYPPPY) is important for interaction with CD80 and CD86. N-linked (GlcNAc...) asparagine glycosylation is present at asparagine 145. A homodimerization region spans residues 150-155 (YVIDPE). A helical transmembrane segment spans residues 162 to 182 (FLLWILAAVSSGLFFYSFLIT). At 183–223 (AVSLSKMLKKRSPLTTGVYVKMPPTGPECEKQFQPYFIPIN) the chain is on the cytoplasmic side. Tyrosine 201 is subject to Phosphotyrosine; by TXK and JAK2.

As to quaternary structure, homodimer; disulfide-linked. Binds to CD80/B7-1 and CD86/B7.2. Interacts with ICOSLG. Post-translationally, N-glycosylation is important for dimerization. Phosphorylation at Tyr-201 prevents binding to the AP-2 adapter complex, blocks endocytosis, and leads to retention of CTLA4 on the cell surface.

The protein localises to the cell membrane. Its function is as follows. Inhibitory receptor acting as a major negative regulator of T-cell responses. The affinity of CTLA4 for its natural B7 family ligands, CD80 and CD86, is considerably stronger than the affinity of their cognate stimulatory coreceptor CD28. This chain is Cytotoxic T-lymphocyte protein 4 (CTLA4), found in Canis lupus familiaris (Dog).